We begin with the raw amino-acid sequence, 671 residues long: Solute carrier family 53 member 1 (671 aa).

Residues 1–193 (MKFAEHLTAH…DIDRLIQETE (193 aa)) form an important for promoting lysosomal/autophagosomal degradation of PXo bodies following inorganic phosphate (Pi) starvation region. Topologically, residues 1 to 228 (MKFAEHLTAH…EQQSPWTTFK (228 aa)) are cytoplasmic. Residues 2–218 (KFAEHLTAHI…MKRLRVPPLG (217 aa)) form the SPX domain. Residues 152–159 (KILKKHDK) form an important for inositol polyphosphate binding region. Residues 229-253 (VGLFSGAFVVLFITVVIAAMFYGFG) traverse the membrane as a helical segment. The Extracellular segment spans residues 254-255 (EN). The chain crosses the membrane as a helical span at residues 256–287 (WRAGMRMFRAPFLIIECLFLWGVNVYGWRSSG). At 288-300 (VNHVLIFELDPRN) the chain is on the cytoplasmic side. Residues 301 to 328 (HLSEQNIMEVASVFGVIWACCVLSYIFC) form a helical membrane-spanning segment. The Extracellular segment spans residues 329-334 (DPLGIP). The chain crosses the membrane as a helical span at residues 335–356 (QYAAPLCLYTLMAAFLLNPTKT). An intramembrane region (helical) is located at residues 357–374 (FHHEARFWAIRILIRVIM). Residues 375–379 (APFCF) lie on the Cytoplasmic side of the membrane. The chain crosses the membrane as a discontinuously helical span at residues 380–413 (VNFADFWLADQLNSMVPAFLDIPFLICFFGRSPT). Phosphate is bound by residues aspartate 389 and asparagine 392. At 414–415 (WH) the chain is on the extracellular side. Residues 416 to 455 (KAGKAASHCVEYVSLLHPIVAIMPAYFRFAQCIRRYRDTK) form a discontinuously helical membrane-spanning segment. The region spanning 423–627 (HCVEYVSLLH…DCSDQTTILR (205 aa)) is the EXS domain. Glutamate 456 is a topological domain (cytoplasmic). Residues 457–488 (SFPHLVNAAKYATSFFVVIFAHKYHTTTDTYP) form a helical membrane-spanning segment. Phosphate contacts are provided by lysine 466 and tyrosine 467. The Extracellular portion of the chain corresponds to 489-491 (LSK). A helical transmembrane segment spans residues 492–519 (ENPWFYCWITAAIFSSCYAYTWDIKMDW). At 520–538 (GLFDSKAGDNRFLREEIVY) the chain is on the cytoplasmic side. Residues 539-570 (SSTWFYYFGIIEDLILRFSWTLSMSLIEAGYI) form a discontinuously helical membrane-spanning segment. The phosphate site is built by arginine 555, arginine 586, and arginine 587. A helical transmembrane segment spans residues 571-609 (EGDVMMTILSPLEVFRRFIWNYFRLENEHLNNVGKFRAV). Residues 610 to 671 (RDISVAPMDC…QGESIEDLCS (62 aa)) lie on the Cytoplasmic side of the membrane.

This sequence belongs to the SYG1 (TC 2.A.94) family. In terms of assembly, homodimer. Interacts with the FAR/SIN/STRIPAK complex members Cka and Pp2A-29B. In terms of tissue distribution, detected in PXo bodies found in the enterocytes and progenitors of the midgut and in the hindgut, but rarely occur in the Malpighian tubules, crop, brain, muscles and germlines (at protein level).

It localises to the membrane. It catalyses the reaction phosphate(in) = phosphate(out). In terms of biological role, inorganic ion transporter that mediates phosphate ion export across the cell membrane. Plays a major role in phosphate homeostasis, preventing intracellular phosphate accumulation and possible calcium phosphate precipitation, ultimately preserving calcium signaling. Binds inositol hexakisphosphate (Ins6P) and similar inositol polyphosphates, such as 5-diphospho-inositol pentakisphosphate (5-InsP7), which are important intracellular signaling molecules involved in regulation of phosphate flux. In enterocytes and differentiating progenitors of the gut, promotes the biogenesis and maintenance of organelles called PXo bodies that store intracellular inorganic phosphate (Pi), and also regulates Cka-JNK mediated tissue homeostasis in response to Pi availability in these tissues. Under conditions of adequate Pi, transports Pi into PXo bodies which convert and store the Pi in the form of phospholipids. It also inhibits Cka at the post-transcriptional level to prevent Cka-bsk/JNK mediated cell proliferation. Upon Pi starvation, Pxo expression is down-regulated resulting in the PXo bodies decreasing in phospholipid content until they undergo lysosomal/autophagosomal degradation and release the stored Pi back into the cytosol for use by the cell. Decrease in Pxo expression also activates the Cka protein, which moves to the nucleus to activate bsk/JNK which then induces nearby progenitor cells to proliferate and form new absorptive cells, probably helping the organism to cope with the nutrient deficiency by maximizing absorption of dietary Pi. This Drosophila melanogaster (Fruit fly) protein is Solute carrier family 53 member 1.